Consider the following 159-residue polypeptide: uncharacterized protein (159 aa).

Disordered regions lie at residues 1–29 and 114–159; these read MHQT…TSES and TRGG…NENT. Positions 15–29 are enriched in polar residues; the sequence is SFSNESPTSRETSES.

This is an uncharacterized protein from Homo sapiens (Human).